Consider the following 623-residue polypeptide: Low affinity potassium transport system protein Kup (623 aa).

12 helical membrane passes run 10-30 (LSAV…TSPL), 47-67 (PDVV…IVSV), 102-122 (ILVI…VITP), 138-158 (PALD…LFVI), 166-186 (VGKL…LLGL), 214-234 (VSFF…ALYA), 248-268 (WFTV…ALLL), 277-297 (PFFL…ATLA), 338-358 (IYIP…IVGF), 364-384 (LAAA…VLFC), 396-416 (FFVY…FSAN), and 420-440 (LFSG…IMTT).

It belongs to the HAK/KUP transporter (TC 2.A.72) family.

The protein localises to the cell inner membrane. The enzyme catalyses K(+)(in) + H(+)(in) = K(+)(out) + H(+)(out). Its function is as follows. Responsible for the low-affinity transport of potassium into the cell. Likely operates as a K(+):H(+) symporter. This Yersinia enterocolitica serotype O:8 / biotype 1B (strain NCTC 13174 / 8081) protein is Low affinity potassium transport system protein Kup.